The following is a 218-amino-acid chain: CTD kinase subunit gamma (218 aa).

A CID domain is found at 2-138 (DPFEGRMTFL…DAMATVEAHE (137 aa)). The interval 137 to 157 (HEQASKSGDTSTSGAISKNDI) is disordered. Polar residues predominate over residues 141-152 (SKSGDTSTSGAI).

The protein belongs to the CTK3 family. As to quaternary structure, CTDK-I consists of three subunits, ctk1/lsk1, ctk2/lsc1 and ctk3 (also called alpha, beta and gamma).

It is found in the cytoplasm. The protein resides in the nucleus. Functionally, subunit of the CTDK-I complex, which hyperphosphorylates the C-terminal heptapeptide repeat domain (CTD) of the largest RNA polymerase II subunit. As part of the CTDK-I complex, involved in RNA polymerase II transcriptional elongation and pre-mRNA 3'-end processing. Together with ctk2, required for ctk1/lsk1 CTD kinase activation. This chain is CTD kinase subunit gamma, found in Schizosaccharomyces pombe (strain 972 / ATCC 24843) (Fission yeast).